Reading from the N-terminus, the 79-residue chain is MSGLGIMVLALLLLVFMATSHQDGGGKQATQRDAINVRRRRSITRRVVTETCKEYCEDRDKTCCGLENGQPDCANLCLG.

A signal peptide spans 1-20 (MSGLGIMVLALLLLVFMATS). Positions 21–44 (HQDGGGKQATQRDAINVRRRRSIT) are excised as a propeptide. Disulfide bonds link Cys52-Cys64, Cys56-Cys73, and Cys63-Cys77. Leu78 is modified (leucine amide).

Belongs to the conotoxin O3 superfamily. As to expression, expressed by the venom duct.

The protein localises to the secreted. This is Conotoxin VnMSGL-0122 from Conus ventricosus (Mediterranean cone).